A 207-amino-acid polypeptide reads, in one-letter code: Uridine kinase (207 aa).

14-21 (GGSGSGKT) lines the ATP pocket.

This sequence belongs to the uridine kinase family.

Its subcellular location is the cytoplasm. It carries out the reaction uridine + ATP = UMP + ADP + H(+). It catalyses the reaction cytidine + ATP = CMP + ADP + H(+). It participates in pyrimidine metabolism; CTP biosynthesis via salvage pathway; CTP from cytidine: step 1/3. It functions in the pathway pyrimidine metabolism; UMP biosynthesis via salvage pathway; UMP from uridine: step 1/1. In Deinococcus deserti (strain DSM 17065 / CIP 109153 / LMG 22923 / VCD115), this protein is Uridine kinase.